The primary structure comprises 153 residues: Protein SprT-like (153 aa).

A SprT-like domain is found at 7 to 145 (QTLVEKISIV…VCGKCHGRLS (139 aa)). Residue His-67 coordinates Zn(2+). Glu-68 is a catalytic residue. His-71 contacts Zn(2+).

This sequence belongs to the SprT family. The cofactor is Zn(2+).

It is found in the cytoplasm. This Enterococcus faecalis (strain ATCC 700802 / V583) protein is Protein SprT-like.